The following is a 104-amino-acid chain: Large ribosomal subunit protein bL21 (104 aa).

Belongs to the bacterial ribosomal protein bL21 family. As to quaternary structure, part of the 50S ribosomal subunit. Contacts protein L20.

Its function is as follows. This protein binds to 23S rRNA in the presence of protein L20. This is Large ribosomal subunit protein bL21 from Caldanaerobacter subterraneus subsp. tengcongensis (strain DSM 15242 / JCM 11007 / NBRC 100824 / MB4) (Thermoanaerobacter tengcongensis).